The primary structure comprises 377 residues: uncharacterized protein (377 aa).

4 helical membrane passes run 26-46 (TFQN…VVAI), 67-87 (TVGS…WVII), 108-128 (FLTF…ISLT), and 135-155 (IDYG…ALYI).

Its subcellular location is the cell membrane. This is an uncharacterized protein from Methanocaldococcus jannaschii (strain ATCC 43067 / DSM 2661 / JAL-1 / JCM 10045 / NBRC 100440) (Methanococcus jannaschii).